The following is a 445-amino-acid chain: Tubulin beta chain (445 aa).

The GTP site is built by Gln11, Glu69, Ser138, Gly142, Thr143, Gly144, Asn205, and Asn227. Glu69 contacts Mg(2+).

The protein belongs to the tubulin family. In terms of assembly, dimer of alpha and beta chains. A typical microtubule is a hollow water-filled tube with an outer diameter of 25 nm and an inner diameter of 15 nM. Alpha-beta heterodimers associate head-to-tail to form protofilaments running lengthwise along the microtubule wall with the beta-tubulin subunit facing the microtubule plus end conferring a structural polarity. Microtubules usually have 13 protofilaments but different protofilament numbers can be found in some organisms and specialized cells. Mg(2+) serves as cofactor.

The protein localises to the cytoplasm. It localises to the cytoskeleton. In terms of biological role, tubulin is the major constituent of microtubules, a cylinder consisting of laterally associated linear protofilaments composed of alpha- and beta-tubulin heterodimers. Microtubules grow by the addition of GTP-tubulin dimers to the microtubule end, where a stabilizing cap forms. Below the cap, tubulin dimers are in GDP-bound state, owing to GTPase activity of alpha-tubulin. This chain is Tubulin beta chain (TUB2), found in Ajellomyces capsulatus (Darling's disease fungus).